The following is a 348-amino-acid chain: Photosystem II protein D1 (348 aa).

3 consecutive transmembrane segments (helical) span residues 33 to 50 (YIGWFGILMFPLISLATV), 122 to 137 (HFIFGAGAWMGREWEF), and 146 to 160 (WIFVAFSAPLVASCA). His-122 contacts chlorophyll a. Residue Trp-130 participates in pheophytin a binding. 2 residues coordinate [CaMn4O5] cluster: Asp-174 and Glu-193. A helical membrane pass occupies residues 201–222 (FHILGVAGVFGGSLFSAMHGSL). His-202 is a chlorophyll a binding site. Residues His-219 and 268–269 (SF) each bind a quinone. His-219 provides a ligand contact to Fe cation. His-276 contributes to the Fe cation binding site. The helical transmembrane segment at 278-292 (FLAAWPVIGIWFTAL) threads the bilayer. Positions 336, 337, 346, and 348 each coordinate [CaMn4O5] cluster.

It belongs to the reaction center PufL/M/PsbA/D family. As to quaternary structure, PSII is composed of 1 copy each of membrane proteins PsbA, PsbB, PsbC, PsbD, PsbE, PsbF, PsbH, PsbI, PsbJ, PsbK, PsbL, PsbM, PsbT, PsbX, PsbY, PsbZ, Psb30/Ycf12, at least 3 peripheral proteins of the oxygen-evolving complex and a large number of cofactors. It forms dimeric complexes. The D1/D2 heterodimer binds P680, chlorophylls that are the primary electron donor of PSII, and subsequent electron acceptors. It shares a non-heme iron and each subunit binds pheophytin, quinone, additional chlorophylls, carotenoids and lipids. D1 provides most of the ligands for the Mn4-Ca-O5 cluster of the oxygen-evolving complex (OEC). There is also a Cl(-1) ion associated with D1 and D2, which is required for oxygen evolution. The PSII complex binds additional chlorophylls, carotenoids and specific lipids. is required as a cofactor. In terms of processing, tyr-165 forms a radical intermediate that is referred to as redox-active TyrZ, YZ or Y-Z.

The protein localises to the plastid. Its subcellular location is the chloroplast thylakoid membrane. The enzyme catalyses 2 a plastoquinone + 4 hnu + 2 H2O = 2 a plastoquinol + O2. Photosystem II (PSII) is a light-driven water:plastoquinone oxidoreductase that uses light energy to abstract electrons from H(2)O, generating O(2) and a proton gradient subsequently used for ATP formation. It consists of a core antenna complex that captures photons, and an electron transfer chain that converts photonic excitation into a charge separation. The D1/D2 (PsbA/PsbD) reaction center heterodimer binds P680, the primary electron donor of PSII as well as several subsequent electron acceptors. This Heterocapsa rotundata (Dinoflagellate) protein is Photosystem II protein D1.